A 159-amino-acid polypeptide reads, in one-letter code: MTQLTHINAAGEAHMVDVSAKAETVREARAEAFVEMLPTTLAMIIEGSHHKGDVFATARIAGIQAAKRTWELIPLCHPLMLSKVEVQLEAQPEHSRVRIETCCRLTGKTGVEMEALTAASVAALTIYDMCKAVQKDMVIGPVRLLAKSGGKSGDFKVEL.

Substrate contacts are provided by residues 75–77 (LCH) and 113–114 (ME). The active site involves Asp128.

The protein belongs to the MoaC family. As to quaternary structure, homohexamer; trimer of dimers.

The catalysed reaction is (8S)-3',8-cyclo-7,8-dihydroguanosine 5'-triphosphate = cyclic pyranopterin phosphate + diphosphate. Its pathway is cofactor biosynthesis; molybdopterin biosynthesis. In terms of biological role, catalyzes the conversion of (8S)-3',8-cyclo-7,8-dihydroguanosine 5'-triphosphate to cyclic pyranopterin monophosphate (cPMP). The sequence is that of Cyclic pyranopterin monophosphate synthase from Serratia proteamaculans (strain 568).